The primary structure comprises 272 residues: MTRQWETIREYKEIKYELYDGIAKVTINRPEVRNAFTPNTVQEMIDAFTRARDDQRISVIILTGEGDKAFCSGGDQKVRGHGGYVGDDQIPRLNVLDLQRLIRVIPKPVVAMVRGYAIGGGNVLNVVCDLTIAADNAIFGQTGPKVGSFDAGYGSGYLARIVGHKKAREIWYLCRQYNAQEALDMGLVNTVVPLDQVEDETVQWCQEMKQHSPTALRFLKAAMNADTDGLAGLQQMAGDATLLYYTTDEAKEGRDAFKEKRDPDFDQFPKFP.

Substrate contacts are provided by residues Arg-33, 72-76 (SGGDQ), Tyr-84, 116-120 (YAIGG), Thr-142, Ser-148, Tyr-245, and Lys-260. 141–143 (QTG) contributes to the hydrogencarbonate binding site. Over residues 253-264 (GRDAFKEKRDPD) the composition is skewed to basic and acidic residues. The disordered stretch occupies residues 253-272 (GRDAFKEKRDPDFDQFPKFP).

Belongs to the enoyl-CoA hydratase/isomerase family. MenB subfamily. The cofactor is hydrogencarbonate.

It catalyses the reaction 2-succinylbenzoyl-CoA + H(+) = 1,4-dihydroxy-2-naphthoyl-CoA + H2O. The protein operates within quinol/quinone metabolism; 1,4-dihydroxy-2-naphthoate biosynthesis; 1,4-dihydroxy-2-naphthoate from chorismate: step 6/7. Its pathway is quinol/quinone metabolism; menaquinone biosynthesis. Converts o-succinylbenzoyl-CoA (OSB-CoA) to 1,4-dihydroxy-2-naphthoyl-CoA (DHNA-CoA). This Staphylococcus saprophyticus subsp. saprophyticus (strain ATCC 15305 / DSM 20229 / NCIMB 8711 / NCTC 7292 / S-41) protein is 1,4-dihydroxy-2-naphthoyl-CoA synthase.